The primary structure comprises 284 residues: 2-dehydro-3-deoxyphosphooctonate aldolase (284 aa).

Belongs to the KdsA family.

Its subcellular location is the cytoplasm. The catalysed reaction is D-arabinose 5-phosphate + phosphoenolpyruvate + H2O = 3-deoxy-alpha-D-manno-2-octulosonate-8-phosphate + phosphate. It participates in carbohydrate biosynthesis; 3-deoxy-D-manno-octulosonate biosynthesis; 3-deoxy-D-manno-octulosonate from D-ribulose 5-phosphate: step 2/3. It functions in the pathway bacterial outer membrane biogenesis; lipopolysaccharide biosynthesis. The sequence is that of 2-dehydro-3-deoxyphosphooctonate aldolase from Burkholderia cenocepacia (strain ATCC BAA-245 / DSM 16553 / LMG 16656 / NCTC 13227 / J2315 / CF5610) (Burkholderia cepacia (strain J2315)).